The chain runs to 421 residues: Atrochrysone carboxyl ACP thioesterase (421 aa).

Zn(2+) is bound by residues H207, H209, D211, and H212. D211 (proton donor/acceptor) is an active-site residue.

This sequence belongs to the metallo-beta-lactamase superfamily. The cofactor is Zn(2+). In terms of tissue distribution, specifically expressed in conidia.

The enzyme catalyses atrochrysone carboxyl-[ACP] + H2O = atrochrysone carboxylate + holo-[ACP] + H(+). Its pathway is secondary metabolite biosynthesis. Its function is as follows. Atrochrysone carboxyl ACP thioesterase; part of the gene cluster that mediates the biosynthesis of trypacidin, a mycotoxin with antiprotozoal activity and that plays a role in the infection process. The pathway begins with the synthesis of atrochrysone thioester by the polyketide synthase (PKS) tpcC. The atrochrysone carboxyl ACP thioesterase tpcB then breaks the thioester bond and releases the atrochrysone carboxylic acid from tpcC. The decarboxylase tpcK converts atrochrysone carboxylic acid to atrochrysone which is further reduced into emodin anthrone. The next step is performed by the emodin anthrone oxygenase tpcL that catalyzes the oxidation of emodin anthrone to emodin. Emodin O-methyltransferase encoded by tpcA catalyzes methylation of the 8-hydroxy group of emodin to form questin. Ring cleavage of questin by questin oxidase tpcI leads to desmethylsulochrin via several intermediates including questin epoxide. Another methylation step catalyzed by tpcM leads to the formation of sulochrin which is further converted to monomethylsulfochrin by tpcH. Finally, the tpcJ catalyzes the conversion of monomethylsulfochrin to trypacidin. Trypacidin is toxic for human pulmonary and bronchial epithelial cells by initiating the intracellular formation of nitric oxide (NO) and hydrogen peroxide (H(2)O(2)), thus triggering host necrotic cell death. The trypacidin pathway is also able to produce endocrocin via a distinct route from the endocrocin Enc pathway. The chain is Atrochrysone carboxyl ACP thioesterase from Aspergillus fumigatus (strain ATCC MYA-4609 / CBS 101355 / FGSC A1100 / Af293) (Neosartorya fumigata).